The sequence spans 99 residues: Carboxysome shell vertex protein CcmL (99 aa).

Residues 1–83 (MRIAKVRGTV…VDAAVIAIID (83 aa)) form the BMV domain.

It belongs to the CcmL/EutN family. CcmL subfamily. In terms of assembly, homopentamer. Interacts with full-length CcmM.

The protein resides in the carboxysome. Probably forms vertices in the carboxysome, a polyhedral inclusion where RuBisCO (ribulose bisphosphate carboxylase, rbcL-rbcS) is sequestered. Has been modeled to induce curvature upon insertion into an otherwise flat hexagonal molecular layer of CcmK subunits. Its function is as follows. Beta-carboxysome assembly initiates when soluble RuBisCO is condensed into a liquid matrix in a pre-carboxysome by the RbcS-like domains of probably both CcmM58 and CcmM35. CcmN interacts with the N-terminus of CcmM58, and then recruits the CcmK2 major shell protein via CcmN's encapsulation peptide. Shell formation requires CcmK proteins and CcmO. CcmL caps the otherwise elongated carboxysome. Once fully encapsulated carboxysomes are formed, they migrate within the cell probably via interactions with the cytoskeleton. The chain is Carboxysome shell vertex protein CcmL from Synechococcus elongatus (strain ATCC 33912 / PCC 7942 / FACHB-805) (Anacystis nidulans R2).